We begin with the raw amino-acid sequence, 297 residues long: Glycerol-3-phosphate dehydrogenase [NAD(P)+] (297 aa).

Residues Trp11, Arg33, and Lys79 each contribute to the NADPH site. Residues Lys79, Gly107, and Ser109 each contribute to the sn-glycerol 3-phosphate site. Ala111 is an NADPH binding site. Sn-glycerol 3-phosphate is bound by residues Lys161, Asp214, Ser224, Arg225, and Asn226. Residue Lys161 is the Proton acceptor of the active site. Arg225 provides a ligand contact to NADPH. Residues Val249 and Glu251 each contribute to the NADPH site.

It belongs to the NAD-dependent glycerol-3-phosphate dehydrogenase family.

It localises to the cytoplasm. It carries out the reaction sn-glycerol 3-phosphate + NAD(+) = dihydroxyacetone phosphate + NADH + H(+). The enzyme catalyses sn-glycerol 3-phosphate + NADP(+) = dihydroxyacetone phosphate + NADPH + H(+). Its pathway is membrane lipid metabolism; glycerophospholipid metabolism. Functionally, catalyzes the reduction of the glycolytic intermediate dihydroxyacetone phosphate (DHAP) to sn-glycerol 3-phosphate (G3P), the key precursor for phospholipid synthesis. This is Glycerol-3-phosphate dehydrogenase [NAD(P)+] from Campylobacter jejuni subsp. doylei (strain ATCC BAA-1458 / RM4099 / 269.97).